We begin with the raw amino-acid sequence, 1025 residues long: Leucyl-cystinyl aminopeptidase (1025 aa).

N-acetylmethionine is present on Met1. Residues 1–109 (MESFTNDRLQ…DGTCSLPSAR (109 aa)) lie on the Cytoplasmic side of the membrane. Positions 53–54 (LL) match the Dileucine internalization motif motif. Tyr70 is subject to Phosphotyrosine. Positions 76-77 (LL) match the Dileucine internalization motif motif. 2 positions are modified to phosphoserine: Ser80 and Ser91. Residues 96–101 (RQSPDG) are tankyrase binding. The helical; Signal-anchor for type II membrane protein transmembrane segment at 110–131 (TLVICVFVIVVAVSVIMVIYLL) threads the bilayer. The Extracellular segment spans residues 132-1025 (PRCTFTKEGC…RNLKTLSQWL (894 aa)). Asn145, Asn184, Asn215, Asn256, and Asn266 each carry an N-linked (GlcNAc...) asparagine glycan. Glu295 serves as a coordination point for substrate. N-linked (GlcNAc...) asparagine glycans are attached at residues Asn368 and Asn374. 428–432 (GAMEN) contributes to the substrate binding site. An N-linked (GlcNAc...) asparagine glycan is attached at Asn447. Residue His464 participates in Zn(2+) binding. Glu465 functions as the Proton acceptor in the catalytic mechanism. 2 residues coordinate Zn(2+): His468 and Glu487. Asn525, Asn578, Asn664, Asn682, Asn695, Asn758, Asn834, Asn850, and Asn989 each carry an N-linked (GlcNAc...) asparagine glycan.

This sequence belongs to the peptidase M1 family. In terms of assembly, homodimer. Binds tankyrases 1 and 2. It depends on Zn(2+) as a cofactor.

The protein resides in the cell membrane. The protein localises to the endomembrane system. It catalyses the reaction Release of an N-terminal amino acid, Cys-|-Xaa-, in which the half-cystine residue is involved in a disulfide loop, notably in oxytocin or vasopressin. Hydrolysis rates on a range of aminoacyl arylamides exceed that for the cystinyl derivative, however.. Release of an N-terminal amino acid, cleave before cysteine, leucine as well as other amino acids. Degrades peptide hormones such as oxytocin, vasopressin and angiotensin III, and plays a role in maintaining homeostasis during pregnancy. May be involved in the inactivation of neuronal peptides in the brain. Cleaves Met-enkephalin and dynorphin. Binds angiotensin IV and may be the angiotensin IV receptor in the brain. The protein is Leucyl-cystinyl aminopeptidase (Lnpep) of Mus musculus (Mouse).